A 531-amino-acid chain; its full sequence is Zinc finger C2HC domain-containing protein 1C (531 aa).

Residues methionine 16–leucine 45 form a disordered region. The span at tyrosine 35–serine 44 shows a compositional bias: low complexity. Positions valine 209–isoleucine 264 form a coiled coil. Disordered stretches follow at residues phenylalanine 290–aspartate 318 and asparagine 334–glycine 387. Residues glutamate 293–glutamate 305 show a composition bias toward basic and acidic residues. The segment covering arginine 306–glutamine 315 has biased composition (polar residues). A compositionally biased stretch (basic and acidic residues) spans lysine 335–methionine 345. A compositionally biased stretch (low complexity) spans serine 366–serine 380. 2 consecutive C2HC/C3H-type zinc fingers follow at residues glutamine 385–serine 414 and aspartate 493–arginine 522. The Zn(2+) site is built by cysteine 389, cysteine 392, histidine 404, cysteine 408, cysteine 497, cysteine 500, histidine 512, and cysteine 516.

Belongs to the ZC2HC1 family. Zn(2+) is required as a cofactor.

In Macaca fascicularis (Crab-eating macaque), this protein is Zinc finger C2HC domain-containing protein 1C (ZC2HC1C).